The primary structure comprises 63 residues: Large ribosomal subunit protein bL35 (63 aa).

The segment at 24–44 (RAKAYRSHRATGKTTKQKRQL) is disordered.

The protein belongs to the bacterial ribosomal protein bL35 family.

This chain is Large ribosomal subunit protein bL35, found in Mycoplasma mycoides subsp. mycoides SC (strain CCUG 32753 / NCTC 10114 / PG1).